The sequence spans 171 residues: Protein BTG1 (171 aa).

Ser-159 is subject to Phosphoserine.

This sequence belongs to the BTG family. As to quaternary structure, interacts with CNOT7 and CNOT8.

Anti-proliferative protein. The chain is Protein BTG1 (BTG1) from Bos taurus (Bovine).